A 218-amino-acid chain; its full sequence is Ribose-5-phosphate isomerase A (218 aa).

Substrate contacts are provided by residues threonine 28 to threonine 31, aspartate 81 to aspartate 84, and lysine 94 to glycine 97. Glutamate 103 serves as the catalytic Proton acceptor. Lysine 121 provides a ligand contact to substrate.

This sequence belongs to the ribose 5-phosphate isomerase family. In terms of assembly, homodimer.

It catalyses the reaction aldehydo-D-ribose 5-phosphate = D-ribulose 5-phosphate. It participates in carbohydrate degradation; pentose phosphate pathway; D-ribose 5-phosphate from D-ribulose 5-phosphate (non-oxidative stage): step 1/1. Functionally, catalyzes the reversible conversion of ribose-5-phosphate to ribulose 5-phosphate. The polypeptide is Ribose-5-phosphate isomerase A (Blochmanniella pennsylvanica (strain BPEN)).